A 217-amino-acid polypeptide reads, in one-letter code: Peptide methionine sulfoxide reductase MsrA 1 (217 aa).

The active site involves Cys54.

Belongs to the MsrA Met sulfoxide reductase family.

The enzyme catalyses L-methionyl-[protein] + [thioredoxin]-disulfide + H2O = L-methionyl-(S)-S-oxide-[protein] + [thioredoxin]-dithiol. The catalysed reaction is [thioredoxin]-disulfide + L-methionine + H2O = L-methionine (S)-S-oxide + [thioredoxin]-dithiol. Has an important function as a repair enzyme for proteins that have been inactivated by oxidation. Catalyzes the reversible oxidation-reduction of methionine sulfoxide in proteins to methionine. The protein is Peptide methionine sulfoxide reductase MsrA 1 (msrA1) of Caulobacter vibrioides (strain ATCC 19089 / CIP 103742 / CB 15) (Caulobacter crescentus).